The chain runs to 150 residues: UPF0506 protein SJCHGC03047 (150 aa).

A signal peptide spans 1 to 18 (MNTCIQLLILCLVTLTNS). Residues N20, N48, and N110 are each glycosylated (N-linked (GlcNAc...) asparagine). 3 cysteine pairs are disulfide-bonded: C116–C130, C123–C134, and C129–C139.

This sequence belongs to the UPF0506 family.

It is found in the secreted. The chain is UPF0506 protein SJCHGC03047 from Schistosoma japonicum (Blood fluke).